We begin with the raw amino-acid sequence, 373 residues long: Chorismate synthase (373 aa).

Arg46 contacts NADP(+). Residues 123–125 (RSS), 251–252 (NA), Gly295, 310–314 (KPTPS), and Arg337 each bind FMN.

The protein belongs to the chorismate synthase family. The cofactor is FMNH2.

The catalysed reaction is 5-O-(1-carboxyvinyl)-3-phosphoshikimate = chorismate + phosphate. It functions in the pathway metabolic intermediate biosynthesis; chorismate biosynthesis; chorismate from D-erythrose 4-phosphate and phosphoenolpyruvate: step 7/7. Functionally, catalyzes the anti-1,4-elimination of the C-3 phosphate and the C-6 proR hydrogen from 5-enolpyruvylshikimate-3-phosphate (EPSP) to yield chorismate, which is the branch point compound that serves as the starting substrate for the three terminal pathways of aromatic amino acid biosynthesis. This reaction introduces a second double bond into the aromatic ring system. The protein is Chorismate synthase of Methanococcus maripaludis (strain C5 / ATCC BAA-1333).